Consider the following 408-residue polypeptide: Serine/threonine transporter SstT (408 aa).

A run of 9 helical transmembrane segments spans residues 11 to 31 (LANGSLVLQILVGIIAGVSLA), 43 to 63 (FLGSLFVGALKAIAPILVFIL), 82 to 102 (IVVLYLFGTFAAALTAVLLSM), 141 to 161 (ALMTGNYIGILAWGVGLGLAL), 192 to 212 (IGIFGLVAATFAETGFAAIAG), 216 to 236 (LLAVLLGAMAIIALIVNPLIV), 290 to 310 (IPLGATINMGGAAITITVLTL), 316 to 336 (LGIQVDLLTALLLSVVAAISA), and 363 to 383 (VAMQVVAVGFIIGVIQDAAET).

The protein belongs to the dicarboxylate/amino acid:cation symporter (DAACS) (TC 2.A.23) family.

The protein resides in the cell inner membrane. It catalyses the reaction L-serine(in) + Na(+)(in) = L-serine(out) + Na(+)(out). The catalysed reaction is L-threonine(in) + Na(+)(in) = L-threonine(out) + Na(+)(out). Its function is as follows. Involved in the import of serine and threonine into the cell, with the concomitant import of sodium (symport system). This Shewanella sp. (strain MR-4) protein is Serine/threonine transporter SstT.